The following is a 648-amino-acid chain: Bifunctional protein TilS/HprT (648 aa).

29-34 (SGGPDS) contacts ATP. D627 provides a ligand contact to Mg(2+).

In the N-terminal section; belongs to the tRNA(Ile)-lysidine synthase family. This sequence in the C-terminal section; belongs to the purine/pyrimidine phosphoribosyltransferase family. Mg(2+) is required as a cofactor.

The protein resides in the cytoplasm. The enzyme catalyses IMP + diphosphate = hypoxanthine + 5-phospho-alpha-D-ribose 1-diphosphate. It carries out the reaction GMP + diphosphate = guanine + 5-phospho-alpha-D-ribose 1-diphosphate. The catalysed reaction is cytidine(34) in tRNA(Ile2) + L-lysine + ATP = lysidine(34) in tRNA(Ile2) + AMP + diphosphate + H(+). Its function is as follows. Ligates lysine onto the cytidine present at position 34 of the AUA codon-specific tRNA(Ile) that contains the anticodon CAU, in an ATP-dependent manner. Cytidine is converted to lysidine, thus changing the amino acid specificity of the tRNA from methionine to isoleucine. The polypeptide is Bifunctional protein TilS/HprT (tilS/hprT) (Listeria innocua serovar 6a (strain ATCC BAA-680 / CLIP 11262)).